The chain runs to 333 residues: Glyceraldehyde-3-phosphate dehydrogenase 1 (333 aa).

Residues 12–13 (RI), Asp35, and Arg79 contribute to the NAD(+) site. Residues 152–154 (SCT), Thr183, Arg198, 211–212 (SG), and Arg234 contribute to the D-glyceraldehyde 3-phosphate site. Cys153 (nucleophile) is an active-site residue. Asn314 lines the NAD(+) pocket.

Belongs to the glyceraldehyde-3-phosphate dehydrogenase family. As to quaternary structure, homotetramer.

Its subcellular location is the cytoplasm. It carries out the reaction D-glyceraldehyde 3-phosphate + phosphate + NAD(+) = (2R)-3-phospho-glyceroyl phosphate + NADH + H(+). The protein operates within carbohydrate degradation; glycolysis; pyruvate from D-glyceraldehyde 3-phosphate: step 1/5. Its activity is regulated as follows. Resistant to pentalenolactone (PL). Functionally, catalyzes the oxidative phosphorylation of glyceraldehyde 3-phosphate (G3P) to 1,3-bisphosphoglycerate (BPG) using the cofactor NAD. The first reaction step involves the formation of a hemiacetal intermediate between G3P and a cysteine residue, and this hemiacetal intermediate is then oxidized to a thioester, with concomitant reduction of NAD to NADH. The reduced NADH is then exchanged with the second NAD, and the thioester is attacked by a nucleophilic inorganic phosphate to produce BPG. The sequence is that of Glyceraldehyde-3-phosphate dehydrogenase 1 (gap1) from Streptomyces arenae.